A 296-amino-acid chain; its full sequence is MNNNAFHFPVLLDAICKLIEDLPVKSDLIYIDSTLGEGVHAKAILEKYDFLSLVGIERDPQILERARQFLSIFEERITYFNDWFDNFFVNYPLNVKANFILVDLGISMFHYKGSKKGFSFLEDEPLDMRLCSSSCKISAAEIVNTYSKYDLEALIYDLSNEHYSRRISKAIVEYRKIKKIETTKELQSIISKVYPFSKVKINPATKTFQALRIYVNDELARLKRSLPFWVENLAKDGILAIITFHSIEDRIVKDFFRSLSCDLYAKISKKPIMPSFDEIKKNKPSRSAKLRVIKKL.

S-adenosyl-L-methionine is bound by residues 38-40 (GVH), E57, F88, D103, and H110.

Belongs to the methyltransferase superfamily. RsmH family.

The protein localises to the cytoplasm. It catalyses the reaction cytidine(1402) in 16S rRNA + S-adenosyl-L-methionine = N(4)-methylcytidine(1402) in 16S rRNA + S-adenosyl-L-homocysteine + H(+). Functionally, specifically methylates the N4 position of cytidine in position 1402 (C1402) of 16S rRNA. The polypeptide is Ribosomal RNA small subunit methyltransferase H (Borreliella burgdorferi (strain ZS7) (Borrelia burgdorferi)).